Reading from the N-terminus, the 382-residue chain is MTEQRPLTIALVAGETSGDILGAGLIRALKERVPNARFVGVAGPRMQAEGCEAWYEMEELAVMGIVEVLGRLRRLLHIRADLTKRFGELKPDVFVGIDAPDFNITLEGNLKKQGIKTIHYVSPSVWAWRQKRVFKIGRATDLVLAFLPFEKAFYDKYNVPCRFIGHTMADAMPLDPDKNAARDVLGIPHDAHCLALLPGSRGAEVEMLSADFLKTAQLLRQTYPDLEIVVPLVNAKRREQFERIKAEVAPDLSVHLLDGMGREAMVASDAALLASGTAALECMLAKCPMVVGYRMKPFTFWLAKRLVKTEYVSLPNLLAGRELVKELLQEECEPQKLAAALLPLLANGKTSHAMHDTFRELHQQIRCNADEQAAQAVLELAQ.

Belongs to the LpxB family.

It carries out the reaction 2-N,3-O-bis[(3R)-3-hydroxytetradecanoyl]-alpha-D-glucosaminyl 1-phosphate + UDP-2-N,3-O-bis[(3R)-3-hydroxytetradecanoyl]-alpha-D-glucosamine = lipid A disaccharide (E. coli) + UDP + H(+). The catalysed reaction is a lipid X + a UDP-2-N,3-O-bis[(3R)-3-hydroxyacyl]-alpha-D-glucosamine = a lipid A disaccharide + UDP + H(+). It functions in the pathway glycolipid biosynthesis; lipid IV(A) biosynthesis; lipid IV(A) from (3R)-3-hydroxytetradecanoyl-[acyl-carrier-protein] and UDP-N-acetyl-alpha-D-glucosamine: step 5/6. Condensation of UDP-2,3-diacylglucosamine and 2,3-diacylglucosamine-1-phosphate to form lipid A disaccharide, a precursor of lipid A, a phosphorylated glycolipid that anchors the lipopolysaccharide to the outer membrane of the cell. This chain is Lipid-A-disaccharide synthase, found in Escherichia fergusonii (strain ATCC 35469 / DSM 13698 / CCUG 18766 / IAM 14443 / JCM 21226 / LMG 7866 / NBRC 102419 / NCTC 12128 / CDC 0568-73).